Consider the following 811-residue polypeptide: Ribosome biogenesis protein ERB1 (811 aa).

Positions 1–11 are enriched in polar residues; the sequence is MARNSKATDTP. The disordered stretch occupies residues 1–138; that stretch reads MARNSKATDT…VHTKFSDGRP (138 aa). A compositionally biased stretch (acidic residues) spans 27-96; the sequence is EDAEESSSDE…LSDVDSEEFS (70 aa). Positions 104–121 are enriched in polar residues; it reads ASITDKLSGTKIRSYSNA. Residues 128-138 are compositionally biased toward basic and acidic residues; the sequence is EVHTKFSDGRP. The segment at 270 to 386 is required for interaction with NOP7; sequence RFVPSKHEAK…LRKVPGYQEG (117 aa). Residues 386-422 form a required for interaction with YTM1 region; sequence GLRERFERCLDLYLAPRTRHNKLNIDPDSLIPELPSP. WD repeat units lie at residues 438–477 and 485–525; these read GHTE…QVYK and NTDD…FDIE. The disordered stretch occupies residues 547-566; sequence TKNSNIKVNSDDEDEEVEKA. WD repeat units follow at residues 595 to 637, 640 to 678, 681 to 720, 724 to 764, and 780 to 811; these read QCRK…SQSP, KSKG…LVKK, PGAR…TPYK, YHDK…DLMT, and INSL…LWTT.

The protein belongs to the WD repeat BOP1/ERB1 family. As to quaternary structure, component of the NOP7 complex, composed of ERB1, NOP7 and YTM1. The complex is held together by ERB1, which interacts with NOP7 via its N-terminal domain and with YTM1 via a high-affinity interaction between the seven-bladed beta-propeller domains of the 2 proteins. The NOP7 complex associates with the 66S pre-ribosome.

Its subcellular location is the nucleus. It localises to the nucleolus. The protein localises to the nucleoplasm. Its function is as follows. Component of the NOP7 complex, which is required for maturation of the 25S and 5.8S ribosomal RNAs and formation of the 60S ribosome. The chain is Ribosome biogenesis protein ERB1 from Debaryomyces hansenii (strain ATCC 36239 / CBS 767 / BCRC 21394 / JCM 1990 / NBRC 0083 / IGC 2968) (Yeast).